The sequence spans 205 residues: Large ribosomal subunit protein bL25 (205 aa).

Positions Phe-178–Glu-205 are disordered. Acidic residues predominate over residues Glu-182–Glu-197.

The protein belongs to the bacterial ribosomal protein bL25 family. CTC subfamily. In terms of assembly, part of the 50S ribosomal subunit; part of the 5S rRNA/L5/L18/L25 subcomplex. Contacts the 5S rRNA. Binds to the 5S rRNA independently of L5 and L18.

Functionally, this is one of the proteins that binds to the 5S RNA in the ribosome where it forms part of the central protuberance. The protein is Large ribosomal subunit protein bL25 of Cutibacterium acnes (strain DSM 16379 / KPA171202) (Propionibacterium acnes).